Reading from the N-terminus, the 1202-residue chain is Voltage-gated inwardly rectifying potassium channel KCNH6 (1202 aa).

Over 1-405 the chain is Cytoplasmic; it reads MGSAALPHAR…YSPFKAVWDW (405 aa). Residues 36–84 enclose the PAS domain; that stretch reads IIYCNDGFCEMFGYSRVEVMQRPCTCDFLTGPDTTKSSIAQLTQALLGS. The region spanning 87 to 139 is the PAC domain; it reads CKLEILYYRKDTSCFRCLVDVVPVKNEDGVVIMFILNFEDLAQLIAKSSGRSL. Disordered regions lie at residues 203 to 243 and 285 to 315; these read ENCV…LGPR and ERRA…SDSD. Positions 213–222 are enriched in basic and acidic residues; it reads LLEKERRPSL. Residues 406 to 426 form a helical membrane-spanning segment; sequence LILLLVIYTAVFTPYSAAFLL. Topologically, residues 427–443 are extracellular; sequence NEEQGEEKHWNCSYSCD. Asn-437 carries N-linked (GlcNAc...) asparagine glycosylation. Residues 444–464 traverse the membrane as a helical segment; the sequence is PLNIIDLIVDIMFIVDIVINF. The Cytoplasmic portion of the chain corresponds to 465-485; it reads RTTYVNINDEVVSHPGKIAIH. The chain crosses the membrane as a helical span at residues 486 to 506; the sequence is YFKGWFLIDMVAAIPFDLLIF. Over 507–515 the chain is Extracellular; sequence RSGSDETTT. The chain crosses the membrane as a helical; Voltage-sensor span at residues 516-536; the sequence is LIGLLKTARLLRLVRVARKLD. Over 537 to 543 the chain is Cytoplasmic; it reads RYSEYGA. Residues 544–564 form a helical membrane-spanning segment; the sequence is AVLFLLMCTFALIAHWLACIW. At 565–608 the chain is on the extracellular side; the sequence is YAIGNVERPYMEHKIGWLDNLGDQIGKRYNDSDLSSGPSIKDKY. N-linked (GlcNAc...) asparagine glycosylation occurs at Asn-594. Positions 609 to 629 form an intramembrane region, pore-forming; the sequence is VTALYFTFSSLTSVGFGNVSP. The Selectivity filter signature appears at 621-626; that stretch reads SVGFGN. The Extracellular portion of the chain corresponds to 630–635; sequence NTNSEK. The helical transmembrane segment at 636-656 threads the bilayer; sequence IFSICVMLIGSLMYASIFGNV. Residues 657–1202 lie on the Cytoplasmic side of the membrane; the sequence is SAIIQRLYSG…HLSDPVLPGS (546 aa). Positions 739 to 839 are cNMP-binding domain; the sequence is AFRGASKGCL…IQREDLLEVL (101 aa). Disordered regions lie at residues 912–948, 1092–1112, and 1140–1202; these read LTNP…GSPT, TPCA…PSYA, and TVYS…LPGS. Polar residues predominate over residues 928 to 937; that stretch reads GSSTTPCSQT. A compositionally biased stretch (basic and acidic residues) spans 1179–1195; that stretch reads EHLEASSEHQDIQRHLS.

This sequence belongs to the potassium channel family. H (Eag) (TC 1.A.1.20) subfamily. Kv11.2/KCNH6 sub-subfamily. In terms of assembly, the potassium channel is probably composed of a homo- or heterotetrameric complex of pore-forming alpha subunits that can associate only within their subfamily.

It is found in the cell membrane. It carries out the reaction K(+)(in) = K(+)(out). Functionally, pore-forming (alpha) subunit of voltage-gated inwardly rectifying potassium channel. Characterized by unusual gating kinetics by producing relatively small outward currents during membrane depolarization and large inward currents during subsequent repolarization which reflect a rapid inactivation during depolarization and quick recovery from inactivation but slow deactivation (closing) during repolarization. Activates even more slowly than KCNH2. The protein is Voltage-gated inwardly rectifying potassium channel KCNH6 of Gallus gallus (Chicken).